The primary structure comprises 59 residues: Single-pass membrane and coiled-coil domain-containing protein 4 (59 aa).

The interval 1–27 (MRQLKGKPKKETSRDKKERKQAMQEAR) is disordered. Over residues 9-27 (KKETSRDKKERKQAMQEAR) the composition is skewed to basic and acidic residues. The stretch at 9-31 (KKETSRDKKERKQAMQEARRQIT) forms a coiled coil. A helical membrane pass occupies residues 32–52 (TVVLPTLAVVVLLIVVFVYVA).

The protein belongs to the SMCO4 family.

Its subcellular location is the membrane. The sequence is that of Single-pass membrane and coiled-coil domain-containing protein 4 (SMCO4) from Bos taurus (Bovine).